Reading from the N-terminus, the 188-residue chain is Elongation factor P-like protein (188 aa).

The protein belongs to the elongation factor P family.

This chain is Elongation factor P-like protein, found in Xanthomonas campestris pv. campestris (strain 8004).